A 233-amino-acid polypeptide reads, in one-letter code: Nickel import system ATP-binding protein NikE (233 aa).

In terms of domain architecture, ABC transporter spans 2-228; it reads IELKHVTFGY…DRHPYTKELV (227 aa). Position 35–42 (35–42) interacts with ATP; the sequence is GESGCGKS.

It belongs to the ABC transporter superfamily. The complex is composed of two ATP-binding proteins (NikD and NikE), two transmembrane proteins (NikB and NikC) and a solute-binding protein (NikA).

The protein localises to the cell membrane. It catalyses the reaction Ni(2+)(out) + ATP + H2O = Ni(2+)(in) + ADP + phosphate + H(+). Functionally, part of the ABC transporter complex NikABCDE (Opp2) involved in nickel import. Probably responsible for energy coupling to the transport system. This chain is Nickel import system ATP-binding protein NikE, found in Staphylococcus aureus (strain MSSA476).